The sequence spans 73 residues: Kappa-scoloptoxin SsmTx-I (73 aa).

An N-terminal signal peptide occupies residues 1-25 (MMMMFSVVSVFLMLLLLKFHDLSMG). Positions 26-37 (EEISLLKKVVRR) are excised as a propeptide. Intrachain disulfides connect cysteine 45/cysteine 56 and cysteine 50/cysteine 63.

This sequence belongs to the scoloptoxin-04 family. As to expression, expressed by the venom gland.

The protein resides in the secreted. In terms of biological role, exhibits highly specific blockage of Kv2.1/KCNB1 (IC(50)=41.7 nM) voltage-gated potassium channels. This blockage is not associated with a significant change in steady-state activation, suggesting that this toxin acts as a channel blocker rather than a gating-modifier. Shows potential analgesic activities in formalin-induced paw licking, thermal pain, and acetic acid-induced abdominal writhing mice models. In Scolopendra mutilans (Chinese red-headed centipede), this protein is Kappa-scoloptoxin SsmTx-I.